A 390-amino-acid polypeptide reads, in one-letter code: Probable inactive secreted aspartyl protease (390 aa).

The N-terminal stretch at 1 to 20 is a signal peptide; that stretch reads MQLTIKALVGILTTISAATA. Positions 21 to 69 are cleaved as a propeptide — removed in mature form; that stretch reads VSFDMENLGAEKRGVSGEELHMLHGNEVLARFANGVYPEVANGTRVSKR. An N-linked (GlcNAc...) asparagine glycan is attached at Asn-62. In terms of domain architecture, Peptidase A1 spans 86 to 388; the sequence is WAVKAKIGSN…KFDSNEMQIA (303 aa). Residues Asp-104 and Asp-273 contribute to the active site. Cys-313 and Cys-346 are disulfide-bonded.

Belongs to the peptidase A1 family.

Its subcellular location is the secreted. Its function is as follows. Probable inactive secreted aspartyl protease. May promote an inflammatory immune response in the host when the host skin barrier is breached. Has no detectable protease activity in vitro on fluorogenic substrates, a peptide library, or with the general protease substrate casein. The presence of the enzyme also does not affect the activity of the secreted aspartyl protease SAP1. The protein is Probable inactive secreted aspartyl protease of Malassezia globosa (strain ATCC MYA-4612 / CBS 7966) (Dandruff-associated fungus).